Here is a 171-residue protein sequence, read N- to C-terminus: Large ribosomal subunit protein uL10 (171 aa).

The protein belongs to the universal ribosomal protein uL10 family. In terms of assembly, part of the ribosomal stalk of the 50S ribosomal subunit. The N-terminus interacts with L11 and the large rRNA to form the base of the stalk. The C-terminus forms an elongated spine to which L12 dimers bind in a sequential fashion forming a multimeric L10(L12)X complex.

Its function is as follows. Forms part of the ribosomal stalk, playing a central role in the interaction of the ribosome with GTP-bound translation factors. This is Large ribosomal subunit protein uL10 from Corynebacterium glutamicum (strain R).